A 99-amino-acid polypeptide reads, in one-letter code: Ribosomal processing cysteine protease Prp (99 aa).

Catalysis depends on His-16, which acts as the Proton donor. Cys-28 (nucleophile) is an active-site residue.

This sequence belongs to the Prp family. In terms of assembly, homodimer.

Its function is as follows. An essential cysteine protease that cleaves the N-terminus from ribosomal protein bL27. The polypeptide is Ribosomal processing cysteine protease Prp (Mycoplasma genitalium (strain ATCC 33530 / DSM 19775 / NCTC 10195 / G37) (Mycoplasmoides genitalium)).